A 287-amino-acid polypeptide reads, in one-letter code: 4-hydroxybenzoate octaprenyltransferase (287 aa).

6 helical membrane passes run 41–61, 89–109, 133–153, 158–178, 218–238, and 267–287; these read WPLI…GCAM, WEAV…ILPL, FFAI…PMAF, NTVP…SIAY, LGIY…WVGW, and NNWL…MAGS.

Belongs to the UbiA prenyltransferase family. It depends on Mg(2+) as a cofactor.

It localises to the cell inner membrane. The catalysed reaction is all-trans-octaprenyl diphosphate + 4-hydroxybenzoate = 4-hydroxy-3-(all-trans-octaprenyl)benzoate + diphosphate. The protein operates within cofactor biosynthesis; ubiquinone biosynthesis. Catalyzes the prenylation of para-hydroxybenzoate (PHB) with an all-trans polyprenyl group. Mediates the second step in the final reaction sequence of ubiquinone-8 (UQ-8) biosynthesis, which is the condensation of the polyisoprenoid side chain with PHB, generating the first membrane-bound Q intermediate 3-octaprenyl-4-hydroxybenzoate. This Burkholderia multivorans (strain ATCC 17616 / 249) protein is 4-hydroxybenzoate octaprenyltransferase.